Reading from the N-terminus, the 675-residue chain is tRNA 5-methylaminomethyl-2-thiouridine biosynthesis bifunctional protein MnmC (675 aa).

Residues 1-245 (MANLPIQHAS…KREMLSGLLP (245 aa)) form a tRNA (mnm(5)s(2)U34)-methyltransferase region. Residues 271–675 (IGGGIASVLT…LLKGKPVTHD (405 aa)) are FAD-dependent cmnm(5)s(2)U34 oxidoreductase.

In the N-terminal section; belongs to the methyltransferase superfamily. tRNA (mnm(5)s(2)U34)-methyltransferase family. This sequence in the C-terminal section; belongs to the DAO family. The cofactor is FAD.

The protein resides in the cytoplasm. It catalyses the reaction 5-aminomethyl-2-thiouridine(34) in tRNA + S-adenosyl-L-methionine = 5-methylaminomethyl-2-thiouridine(34) in tRNA + S-adenosyl-L-homocysteine + H(+). Functionally, catalyzes the last two steps in the biosynthesis of 5-methylaminomethyl-2-thiouridine (mnm(5)s(2)U) at the wobble position (U34) in tRNA. Catalyzes the FAD-dependent demodification of cmnm(5)s(2)U34 to nm(5)s(2)U34, followed by the transfer of a methyl group from S-adenosyl-L-methionine to nm(5)s(2)U34, to form mnm(5)s(2)U34. The protein is tRNA 5-methylaminomethyl-2-thiouridine biosynthesis bifunctional protein MnmC of Pectobacterium atrosepticum (strain SCRI 1043 / ATCC BAA-672) (Erwinia carotovora subsp. atroseptica).